The sequence spans 122 residues: Atrial gland peptide B (122 aa).

The N-terminal stretch at 1–21 (MKANTMFIILCLTLSTLCVSS) is a signal peptide. A propeptide spanning residues 22–34 (QFTSVLGKIFVTN) is cleaved from the precursor. Residue I69 is modified to Isoleucine amide. The propeptide occupies 73 to 122 (AAGGMEQSEGQNPETKSHSWRERSVLTPSLLSLGESLESGISKRISINQD). The tract at residues 74 to 95 (AGGMEQSEGQNPETKSHSWRER) is disordered.

This sequence belongs to the molluscan ELH family.

It localises to the secreted. Its function is as follows. The atrial gland peptide A and peptide B precursors are the source of the 2 peptides that, upon release from this reproductive system gland, initiate the egg-laying process by exciting the bag cell neurons. These neurons, clustered in neural connectives near the abdominal ganglion, in turn release other peptides that act directly on the ganglion and also, via the circulating hemolymph, on many other organs to control the physiological processes of egg-laying. One of these other peptides is the egg-laying hormone. This is Atrial gland peptide B from Aplysia californica (California sea hare).